The following is a 647-amino-acid chain: Acetyl-coenzyme A synthetase (647 aa).

CoA-binding positions include 190 to 193 (RGGK), Thr-310, and Asn-334. ATP is bound by residues 386–388 (GEP), 410–415 (DTWWQT), Asp-499, and Arg-514. Residue Ser-522 coordinates CoA. Arg-525 is a binding site for ATP. Mg(2+) contacts are provided by Val-536, His-538, and Val-541. CoA is bound at residue Arg-583. Position 608 is an N6-acetyllysine (Lys-608).

Belongs to the ATP-dependent AMP-binding enzyme family. Requires Mg(2+) as cofactor. Acetylated. Deacetylation by the SIR2-homolog deacetylase activates the enzyme.

It catalyses the reaction acetate + ATP + CoA = acetyl-CoA + AMP + diphosphate. Functionally, catalyzes the conversion of acetate into acetyl-CoA (AcCoA), an essential intermediate at the junction of anabolic and catabolic pathways. AcsA undergoes a two-step reaction. In the first half reaction, AcsA combines acetate with ATP to form acetyl-adenylate (AcAMP) intermediate. In the second half reaction, it can then transfer the acetyl group from AcAMP to the sulfhydryl group of CoA, forming the product AcCoA. The polypeptide is Acetyl-coenzyme A synthetase (Xanthomonas campestris pv. campestris (strain 8004)).